The following is a 310-amino-acid chain: Beta-ketoacyl-[acyl-carrier-protein] synthase III 1 (310 aa).

Residues C112 and H235 contribute to the active site. Positions 236–240 (QANIR) are ACP-binding. The active site involves N265.

Belongs to the thiolase-like superfamily. FabH family. Homodimer.

The protein localises to the cytoplasm. It carries out the reaction malonyl-[ACP] + acetyl-CoA + H(+) = 3-oxobutanoyl-[ACP] + CO2 + CoA. It participates in lipid metabolism; fatty acid biosynthesis. Its function is as follows. Catalyzes the condensation reaction of fatty acid synthesis by the addition to an acyl acceptor of two carbons from malonyl-ACP. Catalyzes the first condensation reaction which initiates fatty acid synthesis and may therefore play a role in governing the total rate of fatty acid production. Possesses both acetoacetyl-ACP synthase and acetyl transacylase activities. Its substrate specificity determines the biosynthesis of branched-chain and/or straight-chain of fatty acids. This chain is Beta-ketoacyl-[acyl-carrier-protein] synthase III 1, found in Bacillus cereus (strain ATCC 14579 / DSM 31 / CCUG 7414 / JCM 2152 / NBRC 15305 / NCIMB 9373 / NCTC 2599 / NRRL B-3711).